Consider the following 2201-residue polypeptide: Tenascin (2201 aa).

The first 22 residues, 1-22 (MGAMTQLLAGVFLAFLALATEG), serve as a signal peptide directing secretion. N38 carries N-linked (GlcNAc...) asparagine glycosylation. S65 and S70 each carry phosphoserine. S72 is subject to Phosphoserine; by FAM20C. An O-linked (Xyl...) (chondroitin sulfate) serine glycan is attached at S72. The stretch at 118-145 (DVKELLSRLEELENLVSSLREQCTAGAG) forms a coiled coil. N-linked (GlcNAc...) asparagine glycosylation is found at N166 and N184. In terms of domain architecture, EGF-like 1; incomplete spans 174-186 (CVCEPGWKGPNCS). EGF-like domains lie at 186–217 (SEPE…EDCS), 217–248 (SQLA…ADCS), 248–280 (SREI…DDCN), 280–311 (NKPL…EDCS), 311–342 (SELI…EDCG), 342–373 (GKPT…VDCS), 373–404 (SEKR…ADCG), 404–435 (GELK…EDCS), 435–466 (SQLR…YDCS), 466–497 (SDMS…EDCR), 497–528 (RDRQ…PDCA), 528–559 (AELS…KDCK), 559–590 (KEQR…LDCG), and 590–621 (GQHS…EDCS). 42 cysteine pairs are disulfide-bonded: C190–C200, C194–C205, C207–C216, C221–C231, C225–C236, C238–C247, C252–C263, C256–C268, C270–C279, C284–C294, C288–C299, C301–C310, C315–C325, C319–C330, C332–C341, C346–C356, C350–C361, C363–C372, C377–C387, C381–C392, C394–C403, C408–C418, C412–C423, C425–C434, C439–C449, C443–C454, C456–C465, C470–C480, C474–C485, C487–C496, C501–C511, C505–C516, C518–C527, C532–C542, C536–C547, C549–C558, C563–C573, C567–C578, C580–C589, C594–C604, C598–C609, and C611–C620. N327 carries an N-linked (GlcNAc...) asparagine glycan. Fibronectin type-III domains follow at residues 625 to 715 (PPKD…LPAP), 716 to 804 (EGLK…TRLD), 805 to 894 (APSQ…TGLD), 895 to 990 (APRN…TPKD), 991 to 1075 (LQVS…EQAP), 1076 to 1165 (ELEN…TGET), 1167 to 1256 (NLGE…TEEV), 1258 to 1350 (DMGN…LPQL), 1351 to 1439 (GDLA…AKEP), 1440 to 1531 (EIGN…ALPL), 1533 to 1621 (ENLT…EAEP), 1622 to 1711 (EVDN…TAMG), 1712 to 1801 (SPKE…ALDG), 1802 to 1888 (PSGL…TDLD), and 1889 to 1977 (SPRD…IGLL). N788 carries an N-linked (GlcNAc...) asparagine glycan. At T905 the chain carries Phosphothreonine. N1018, N1034, N1079, N1093, N1119, N1184, N1210, N1261, N1275, N1301, N1366, N1392, N1445, N1455, N1485, and N1534 each carry an N-linked (GlcNAc...) asparagine glycan. N1809 is a glycosylation site (N-linked (GlcNAc...) asparagine). A Fibrinogen C-terminal domain is found at 1975–2190 (GLLYPFPKDC…FAEMKLRPSN (216 aa)). N-linked (GlcNAc...) asparagine glycosylation is present at N2162.

It belongs to the tenascin family. In terms of assembly, homohexamer; disulfide-linked. A homotrimer may be formed in the triple coiled-coil region and may be stabilized by disulfide rings at both ends. Two of such half-hexabrachions may be disulfide linked within the central globule. Interacts with CSPG4. Interacts (via the 3rd fibronectin type-III domain) with integrin ITGA9:ITGB1. In terms of tissue distribution, detected in fibroblasts (at protein level).

The protein localises to the secreted. It localises to the extracellular space. Its subcellular location is the extracellular matrix. Its function is as follows. Extracellular matrix protein implicated in guidance of migrating neurons as well as axons during development, synaptic plasticity as well as neuronal regeneration. Promotes neurite outgrowth from cortical neurons grown on a monolayer of astrocytes. Ligand for integrins alpha-8/beta-1, alpha-9/beta-1, alpha-V/beta-3 and alpha-V/beta-6. In tumors, stimulates angiogenesis by elongation, migration and sprouting of endothelial cells. The protein is Tenascin (TNC) of Homo sapiens (Human).